Consider the following 124-residue polypeptide: Small ribosomal subunit protein uS12c (124 aa).

Disordered stretches follow at residues 1-28 (MPTIQQLVRSERRKIHKKTKSPALQSCP) and 104-124 (AAGVKDRRKSRSKYGTKKPKS). Basic residues-rich tracts occupy residues 11 to 20 (ERRKIHKKTK) and 109 to 124 (DRRKSRSKYGTKKPKS).

This sequence belongs to the universal ribosomal protein uS12 family. In terms of assembly, part of the 30S ribosomal subunit.

The protein localises to the plastid. The protein resides in the chloroplast. Its function is as follows. With S4 and S5 plays an important role in translational accuracy. Located at the interface of the 30S and 50S subunits. The protein is Small ribosomal subunit protein uS12c (rps12) of Pyropia yezoensis (Susabi-nori).